The sequence spans 392 residues: Sterol methyltransferase-like 3 (392 aa).

A helical transmembrane segment spans residues V20–S42.

The protein belongs to the class I-like SAM-binding methyltransferase superfamily. Erg6/SMT family.

It localises to the microsome membrane. Functionally, unable to convert squalene, botryococcene, cycloartenol, zymosterol or lanosterol to mono-, di-, tri- or tetramethylated derivatives. This is Sterol methyltransferase-like 3 (SMT-3) from Botryococcus braunii (Green alga).